A 406-amino-acid chain; its full sequence is Tryptophan synthase beta chain (406 aa).

Lys-99 carries the N6-(pyridoxal phosphate)lysine modification.

It belongs to the TrpB family. In terms of assembly, tetramer of two alpha and two beta chains. Pyridoxal 5'-phosphate is required as a cofactor.

It catalyses the reaction (1S,2R)-1-C-(indol-3-yl)glycerol 3-phosphate + L-serine = D-glyceraldehyde 3-phosphate + L-tryptophan + H2O. Its pathway is amino-acid biosynthesis; L-tryptophan biosynthesis; L-tryptophan from chorismate: step 5/5. The beta subunit is responsible for the synthesis of L-tryptophan from indole and L-serine. The chain is Tryptophan synthase beta chain from Rhizobium leguminosarum bv. trifolii (strain WSM2304).